Reading from the N-terminus, the 73-residue chain is uncharacterized protein (73 aa).

The 56-residue stretch at 8-63 (MLTRIKSVYMFIQEKGLVTTQELVDEFGITPRTIQRDLNVLAYNDLVHSPSRGKWE) folds into the HTH deoR-type domain. Positions 25–44 (VTTQELVDEFGITPRTIQRD) form a DNA-binding region, H-T-H motif.

This is an uncharacterized protein from Bacillus subtilis (strain 168).